A 519-amino-acid polypeptide reads, in one-letter code: Fatty acid--[acyl-carrier-protein] ligase ScoC (519 aa).

Thr-167 contacts Mg(2+). 2 residues coordinate ATP: Ile-216 and Thr-312. Glu-313 contributes to the Mg(2+) binding site. ATP-binding residues include Asp-394 and Lys-411.

Belongs to the ATP-dependent AMP-binding enzyme family. Mg(2+) serves as cofactor.

It carries out the reaction a medium-chain fatty acid + holo-[ACP] + ATP = a medium-chain fatty acyl-[ACP] + AMP + diphosphate. The catalysed reaction is a medium-chain fatty acid + ATP + H(+) = a medium-chain fatty acyl-AMP + diphosphate. It catalyses the reaction a medium-chain fatty acyl-AMP + holo-[ACP] = a medium-chain fatty acyl-[ACP] + AMP + H(+). The enzyme catalyses octanoate + holo-[ACP] + ATP = octanoyl-[ACP] + AMP + diphosphate. It carries out the reaction octanoate + ATP + H(+) = octanoyl-AMP + diphosphate. The catalysed reaction is octanoyl-AMP + holo-[ACP] = octanoyl-[ACP] + AMP + H(+). It catalyses the reaction a (2E)-enoyl fatty acid + holo-[ACP] + ATP = a (2E)-enoyl-[ACP] + AMP + diphosphate. The enzyme catalyses a (2E)-enoyl fatty acid + ATP + H(+) = a (2E)-2-fatty-enoyl-AMP + diphosphate. It carries out the reaction a (2E)-2-fatty-enoyl-AMP + holo-[ACP] = a (2E)-enoyl-[ACP] + AMP + H(+). The catalysed reaction is (2E)-2-butenoate + holo-[ACP] + ATP = (2E)-butenoyl-[ACP] + AMP + diphosphate. It catalyses the reaction (2E)-2-butenoate + ATP + H(+) = (2E)-but-2-enoyl-AMP + diphosphate. The enzyme catalyses (2E)-but-2-enoyl-AMP + holo-[ACP] = (2E)-butenoyl-[ACP] + AMP + H(+). It carries out the reaction a (3R)-3-isocyanyl-fatty acid + holo-[ACP] + ATP = a (3R)-3-isocyanyl-fatty acyl-[ACP] + AMP + diphosphate. The catalysed reaction is a (3R)-3-isocyanyl-fatty acid + ATP + H(+) = a (3R)-3-isocyanyl-fatty acyl-AMP + diphosphate. It catalyses the reaction a (3R)-3-isocyanyl-fatty acyl-AMP + holo-[ACP] = a (3R)-3-isocyanyl-fatty acyl-[ACP] + AMP + H(+). The enzyme catalyses (3R)-3-isocyanylbutanoate + holo-[ACP] + ATP = (3R)-3-isocyanylbutanoyl-[ACP] + AMP + diphosphate. It carries out the reaction (3R)-3-isocyanylbutanoate + ATP + H(+) = (3R)-3-isocyanylbutanoyl-AMP + diphosphate. The catalysed reaction is (3R)-3-isocyanylbutanoyl-AMP + holo-[ACP] = (3R)-3-isocyanylbutanoyl-[ACP] + AMP + H(+). Acyl:acyl-carrier protein ligase involved in the biosynthesis of a unique class of isonitrile lipopeptides (INLPs). Shows a strong preference for fatty acids with a short/medium-chain length (C4-C8) in vitro, and accepts alpha,beta-unsaturated fatty acids such as crotonate, which seems to be a physiological substrate. Acts twice during the INLP pathway, catalyzing the activation of crotonate ((2E)-2-butenoate) as well as (3R)-3-isocyanylbutanoate as acyl-adenylates (acyl-AMP), and then the acyl transfer to the dedicated acyl-carrier protein ScoB. This is Fatty acid--[acyl-carrier-protein] ligase ScoC from Streptomyces coeruleorubidus.